A 202-amino-acid chain; its full sequence is Holliday junction resolvase RecU (202 aa).

Residues Thr-85, Asp-87, Glu-100, and Gln-119 each contribute to the Mg(2+) site.

Belongs to the RecU family. Requires Mg(2+) as cofactor.

It localises to the cytoplasm. It carries out the reaction Endonucleolytic cleavage at a junction such as a reciprocal single-stranded crossover between two homologous DNA duplexes (Holliday junction).. Functionally, endonuclease that resolves Holliday junction intermediates in genetic recombination. Cleaves mobile four-strand junctions by introducing symmetrical nicks in paired strands. Promotes annealing of linear ssDNA with homologous dsDNA. Required for DNA repair, homologous recombination and chromosome segregation. This chain is Holliday junction resolvase RecU, found in Streptococcus equi subsp. zooepidemicus (strain MGCS10565).